The chain runs to 519 residues: MHGGQGPQLLLLLLATCLGAQSRNQEERLLADLMRNYDPHLRPAERDSDVVNVSLKLTLTNLISLNEREEALTTNVWIEMQWCDYRLRWDPKDYEGLWILRVPSTMVWQPDIVLGNNVDGVFEVALYCNVLVSPDGCIYWLPPAIFRSSCSISVTYFPFDWQNCSLVFQSQTYSTSEINLQLSQEDGQAIEWIFIDPEAFTENGEWAIRHRPAKMLLDPVTPAEEAGHQKVVFYLLIQRKPLFYVINIIVPCVLISSVAILIYFLPAKAGGQKCTVATNVLLAQTVFLFLVAKKVPETSQAVPLISKYLTFLMVVTILIVVNSVVVLNVSLRSPHTHSMARGVRKVFLRLLPQLLRMHVHPRAPAAVQDARLRLQNGSSSGWPIMTREEGDLCLPRSELLFRQRQRNGLVQAVLEKLENGPEMRQSQEFCGSLKQASPAIQACVDACNLMARARHQQSHFDSGNEEWLLVGRVLDRVCFLAMLSLFICGTAGIFLMAHYNQVPDLPFPGDPRPYLPLPD.

The N-terminal stretch at 1–22 (MHGGQGPQLLLLLLATCLGAQS) is a signal peptide. Residues 23-240 (RNQEERLLAD…VVFYLLIQRK (218 aa)) are Extracellular-facing. Residues Asn52 and Asn163 are each glycosylated (N-linked (GlcNAc...) asparagine). A disulfide bridge connects residues Cys150 and Cys164. 3 helical membrane-spanning segments follow: residues 241-265 (PLFYVINIIVPCVLISSVAILIYFL), 274-292 (CTVATNVLLAQTVFLFLVA), and 308-329 (YLTFLMVVTILIVVNSVVVLNV). The Cytoplasmic portion of the chain corresponds to 330–476 (SLRSPHTHSM…WLLVGRVLDR (147 aa)). Residues 477 to 497 (VCFLAMLSLFICGTAGIFLMA) form a helical membrane-spanning segment.

This sequence belongs to the ligand-gated ion channel (TC 1.A.9) family. Acetylcholine receptor (TC 1.A.9.1) subfamily. Gamma/CHRNG sub-subfamily. As to quaternary structure, pentamer of two alpha chains, and one each of the beta, delta, and gamma (in immature muscle) or epsilon (in mature muscle) chains.

Its subcellular location is the postsynaptic cell membrane. It localises to the cell membrane. The enzyme catalyses K(+)(in) = K(+)(out). The catalysed reaction is Na(+)(in) = Na(+)(out). After binding acetylcholine, the AChR responds by an extensive change in conformation that affects all subunits and leads to opening of an ion-conducting channel across the plasma membrane. The chain is Acetylcholine receptor subunit gamma (Chrng) from Rattus norvegicus (Rat).